The sequence spans 142 residues: uncharacterized protein (142 aa).

Transmembrane regions (helical) follow at residues 3-23, 30-50, and 91-111; these read LIFI…FNLL, SVSW…AVWI, and FFLL…AYFS.

The protein resides in the membrane. This is an uncharacterized protein from Saccharomyces cerevisiae (strain ATCC 204508 / S288c) (Baker's yeast).